The following is a 229-amino-acid chain: Potassium/proton antiporter CemA (229 aa).

Transmembrane regions (helical) follow at residues Phe-7–Phe-27, Ile-114–Leu-134, Ile-154–Val-174, and Ile-189–Ile-209.

It belongs to the CemA family.

It is found in the plastid. The protein localises to the chloroplast inner membrane. The enzyme catalyses K(+)(in) + H(+)(out) = K(+)(out) + H(+)(in). Its function is as follows. Contributes to K(+)/H(+) antiport activity by supporting proton efflux to control proton extrusion and homeostasis in chloroplasts in a light-dependent manner to modulate photosynthesis. Prevents excessive induction of non-photochemical quenching (NPQ) under continuous-light conditions. Indirectly promotes efficient inorganic carbon uptake into chloroplasts. The polypeptide is Potassium/proton antiporter CemA (Coffea arabica (Arabian coffee)).